Consider the following 571-residue polypeptide: Cytoplasmic polyadenylation element-binding protein 2 (571 aa).

Disordered stretches follow at residues 1-23 (MSKS…NGDR) and 51-75 (FKQN…VSQE). A compositionally biased stretch (basic and acidic residues) spans 61-75 (SESRHENEENKVSQE). The RRM domain occupies 435–517 (LVAFIGGVPR…KRVEIKPYFF (83 aa)).

Its function is as follows. Cytoplasmic polyadenylation element binding protein that binds to and regulates the translation of specific mRNAs. The sequence is that of Cytoplasmic polyadenylation element-binding protein 2 (cpb-2) from Caenorhabditis remanei (Caenorhabditis vulgaris).